A 175-amino-acid chain; its full sequence is Regenerating islet-derived protein 3-alpha (175 aa).

The first 26 residues, 1–26, serve as a signal peptide directing secretion; it reads MLPHLVLNSISWMLLSCLLFVFQVQG. A propeptide spanning residues 27-37 is cleaved from the precursor; sequence EDFQKEVPSPR. 3 disulfides stabilise this stretch: C40–C51, C68–C171, and C146–C163. Positions 47–172 constitute a C-type lectin domain; it reads YRSHCYALVM…CDGTLPFVCK (126 aa). Residues H50, H107, E121, and H145 each coordinate Zn(2+). A sufficient to activate EXTL3 region spans residues 103 to 118; that stretch reads WIGLHDPTMGQQPNGG.

Forms a hexameric membrane-permeabilizing oligomeric pore on membrane phospholipids. The hexamer is formed by three dimers related by helical symmetry. Forms filaments, filamentation traps pore complexes and limits damage to host cells. Interacts with EXTL3. In terms of processing, proteolytic processing by trypsin removes an inhibitory N-terminal propeptide and is essential for peptidoglycan binding and antibacterial activity. In terms of tissue distribution, small intestine and pancreas.

The protein localises to the secreted. In terms of biological role, bactericidal C-type lectin. The lack of the EPN motif may explain its inability to bind peptidoglycan. Functionally, acts as a hormone in response to different stimuli like anti-inflammatory signals, such as IL17A, or gut microbiome. Secreted by different cell types to activate its receptor EXTL3 and induce cell specific signaling pathways. Induced by IL17A in keratinocytes, regulates keratinocyte proliferation and differentiation after skin injury via activation of EXTL3-PI3K-AKT signaling pathway. In parallel, inhibits skin inflammation through the inhibition of inflammatory cytokines such as IL6 and TNF. In pancreas, is able to permealize beta-cells membrane and stimulate their proliferation. This is Regenerating islet-derived protein 3-alpha (Reg3a) from Mus musculus (Mouse).